The sequence spans 244 residues: Ribosomal RNA large subunit methyltransferase E (244 aa).

The S-adenosyl-L-methionine site is built by G81, W83, D109, D125, and D149. K189 (proton acceptor) is an active-site residue.

Belongs to the class I-like SAM-binding methyltransferase superfamily. RNA methyltransferase RlmE family.

The protein resides in the cytoplasm. The catalysed reaction is uridine(2552) in 23S rRNA + S-adenosyl-L-methionine = 2'-O-methyluridine(2552) in 23S rRNA + S-adenosyl-L-homocysteine + H(+). Its function is as follows. Specifically methylates the uridine in position 2552 of 23S rRNA at the 2'-O position of the ribose in the fully assembled 50S ribosomal subunit. The polypeptide is Ribosomal RNA large subunit methyltransferase E (Cereibacter sphaeroides (strain ATCC 17029 / ATH 2.4.9) (Rhodobacter sphaeroides)).